The primary structure comprises 291 residues: Protease HtpX homolog (291 aa).

2 helical membrane-spanning segments follow: residues 4–24 (IALF…VASL) and 38–58 (LGAL…ISLL). Position 144 (His-144) interacts with Zn(2+). Glu-145 is an active-site residue. Zn(2+) is bound at residue His-148. A run of 2 helical transmembrane segments spans residues 159 to 179 (LIQG…GYAV) and 199 to 219 (VTTI…VAWF). Zn(2+) is bound at residue Glu-224.

Belongs to the peptidase M48B family. The cofactor is Zn(2+).

It localises to the cell inner membrane. This is Protease HtpX homolog from Paracidovorax citrulli (strain AAC00-1) (Acidovorax citrulli).